A 67-amino-acid polypeptide reads, in one-letter code: Gallinacin-6 (67 aa).

Positions Met-1–Ala-19 are cleaved as a signal peptide. Positions Gly-20 to Ser-25 are excised as a propeptide. 3 cysteine pairs are disulfide-bonded: Cys-31–Cys-60, Cys-38–Cys-53, and Cys-43–Cys-61.

It belongs to the beta-defensin family. Expressed in bone marrow, testis, ovary, lung and trachea. Expressed in the ovarian stroma, but not in the ovarian follicles.

It localises to the secreted. The protein localises to the cytoplasmic granule. Its function is as follows. Has bactericidal activity. Potent activity against S.typhimurium and S.entiriditis. In Gallus gallus (Chicken), this protein is Gallinacin-6 (GAL6).